The following is a 550-amino-acid chain: Transcription factor 7-like 1-C (550 aa).

Residues 1-11 show a composition bias toward gly residues; the sequence is MPQLNSGGGDE. The interval 1–60 is interaction with CTNNB1-A; the sequence is MPQLNSGGGDELGANDELIRFKDEGEQEEKSPGEGSAEDLADVKSSLVNESENHSSDSDS. 3 disordered regions span residues 1 to 76, 182 to 206, and 390 to 473; these read MPQL…EKPR, GTPP…HPSE, and WSAR…SLTT. Basic and acidic residues-rich tracts occupy residues 17 to 32 and 51 to 76; these read ELIR…EKSP and SENH…EKPR. The interval 108-311 is interaction with AES and TLE4-A; it reads LGGITCPMVP…SPNLSRKSNV (204 aa). Positions 323–391 form a DNA-binding region, HMG box; the sequence is IKKPLNAFML…LHSQLYPSWS (69 aa). The span at 406-415 shows a compositional bias: basic and acidic residues; it reads KQSPEMENYT. Residues 407 to 550 are interaction with CTBP-B; sequence QSPEMENYTK…PLSLVTRSSD (144 aa). A compositionally biased stretch (low complexity) spans 444–463; the sequence is SPATPSAALASPAAPAATHS. Residues 464–473 are compositionally biased toward polar residues; that stretch reads EQAQPLSLTT.

The protein belongs to the TCF/LEF family. As to quaternary structure, interacts with csnk1e, ctnnb1-A, ctbp-B, dact1-A and gsk3b. May interact with ase and tle4-A. Post-translationally, phosphorylated. Phosphorylation by csnk1e promotes binding to ctnnb1-A while phosphorylation by gsk3b may reverse this effect.

The protein resides in the nucleus. Its function is as follows. Participates in the Wnt signaling pathway. Binds to DNA and acts as a repressor in the absence of ctnnb1-A and possibly ctnnb1-B, and as an activator in the presence of these proteins. Required early in development for the establishment of the dorsal body axis in response to maternal Wnt signaling. This chain is Transcription factor 7-like 1-C (tcf7l1-c), found in Xenopus laevis (African clawed frog).